Reading from the N-terminus, the 188-residue chain is ATP-dependent protease subunit HslV (188 aa).

Residue threonine 8 is part of the active site. 3 residues coordinate Na(+): alanine 165, cysteine 168, and threonine 171.

It belongs to the peptidase T1B family. HslV subfamily. In terms of assembly, a double ring-shaped homohexamer of HslV is capped on each side by a ring-shaped HslU homohexamer. The assembly of the HslU/HslV complex is dependent on binding of ATP.

The protein resides in the cytoplasm. The enzyme catalyses ATP-dependent cleavage of peptide bonds with broad specificity.. Its activity is regulated as follows. Allosterically activated by HslU binding. Its function is as follows. Protease subunit of a proteasome-like degradation complex believed to be a general protein degrading machinery. In Neorickettsia sennetsu (strain ATCC VR-367 / Miyayama) (Ehrlichia sennetsu), this protein is ATP-dependent protease subunit HslV.